A 126-amino-acid polypeptide reads, in one-letter code: Small ribosomal subunit protein uS13 (126 aa).

Residues 96-126 are disordered; sequence LPVRGQQTKTNARTRKGRRKGTVANKKKVSK. The span at 107 to 126 shows a compositional bias: basic residues; that stretch reads ARTRKGRRKGTVANKKKVSK.

The protein belongs to the universal ribosomal protein uS13 family. In terms of assembly, part of the 30S ribosomal subunit. Forms a loose heterodimer with protein S19. Forms two bridges to the 50S subunit in the 70S ribosome.

Its function is as follows. Located at the top of the head of the 30S subunit, it contacts several helices of the 16S rRNA. In the 70S ribosome it contacts the 23S rRNA (bridge B1a) and protein L5 of the 50S subunit (bridge B1b), connecting the 2 subunits; these bridges are implicated in subunit movement. Contacts the tRNAs in the A and P-sites. The polypeptide is Small ribosomal subunit protein uS13 (Hydrogenobaculum sp. (strain Y04AAS1)).